We begin with the raw amino-acid sequence, 401 residues long: Argininosuccinate synthase (401 aa).

ATP contacts are provided by residues Ala10–Ser18 and Ala38. Tyr89 serves as a coordination point for L-citrulline. Position 119 (Gly119) interacts with ATP. Positions 121, 125, and 126 each coordinate L-aspartate. An L-citrulline-binding site is contributed by Asn125. Arg129, Ser177, Ser186, Glu262, and Tyr274 together coordinate L-citrulline.

It belongs to the argininosuccinate synthase family. Type 1 subfamily. Homotetramer.

The protein resides in the cytoplasm. The catalysed reaction is L-citrulline + L-aspartate + ATP = 2-(N(omega)-L-arginino)succinate + AMP + diphosphate + H(+). It participates in amino-acid biosynthesis; L-arginine biosynthesis; L-arginine from L-ornithine and carbamoyl phosphate: step 2/3. The chain is Argininosuccinate synthase from Prochlorococcus marinus (strain MIT 9303).